A 95-amino-acid polypeptide reads, in one-letter code: Embryonic abundant protein 1 (95 aa).

The segment covering Met1–Arg10 has biased composition (polar residues). A disordered region spans residues Met1 to Ser95. 2 stretches are compositionally biased toward basic and acidic residues: residues Ala40–Arg64 and Gly75–Ser95.

This sequence belongs to the small hydrophilic plant seed protein family. In terms of tissue distribution, expressed in dry seeds and immature embryos.

Functionally, em protein may act as a cytoplasm protectant during desiccation. This is Embryonic abundant protein 1 (EMP1) from Oryza sativa subsp. japonica (Rice).